The following is a 496-amino-acid chain: Transmembrane protein 104 (496 aa).

The Cytoplasmic segment spans residues Met-1–Glu-10. Residues Leu-11 to Leu-31 traverse the membrane as a helical segment. Residues Thr-32 to Ala-36 are Extracellular-facing. The chain crosses the membrane as a helical span at residues Phe-37–Phe-57. At Val-58–Asn-146 the chain is on the cytoplasmic side. Residues Leu-147–Val-167 form a helical membrane-spanning segment. The Extracellular segment spans residues Pro-168 to Arg-204. Asn-193 is a glycosylation site (N-linked (GlcNAc...) asparagine). A helical transmembrane segment spans residues Val-205 to Phe-225. The Cytoplasmic portion of the chain corresponds to Asp-226–Leu-233. A helical transmembrane segment spans residues Gln-234–Ile-254. Residues Arg-255–Leu-276 lie on the Extracellular side of the membrane. The chain crosses the membrane as a helical span at residues Phe-277–Val-297. At Ser-298–Leu-306 the chain is on the cytoplasmic side. A helical transmembrane segment spans residues Val-307–Phe-327. Topologically, residues Cys-328 to Arg-354 are extracellular. A helical membrane pass occupies residues Phe-355 to Thr-375. Residues Leu-376–Arg-397 are Cytoplasmic-facing. A helical membrane pass occupies residues Val-398–Leu-418. Topologically, residues Glu-419 to Leu-421 are extracellular. A helical membrane pass occupies residues Val-422–Val-442. The Cytoplasmic segment spans residues Tyr-443–Trp-470. The chain crosses the membrane as a helical span at residues Val-471–Leu-491. The Extracellular segment spans residues Ser-492–Leu-496.

Belongs to the TMEM104 family.

The protein localises to the membrane. The sequence is that of Transmembrane protein 104 (TMEM104) from Homo sapiens (Human).